An 80-amino-acid chain; its full sequence is DNA-binding protein HU-like (80 aa).

It belongs to the bacterial histone-like protein family.

Functionally, histone-like DNA-binding protein which is capable of wrapping DNA to stabilize it, and thus to prevent its denaturation under extreme environmental conditions. This chain is DNA-binding protein HU-like, found in Rickettsia conorii (strain ATCC VR-613 / Malish 7).